Consider the following 106-residue polypeptide: MVNVPKTRQTFCKKYDKHQPHKVTQYKKGKDSLYALGKRRYDRKQSGYGGHTKPIFWKKAKTTKKIVLRLECVEPNCRSERMLATKRCKHFELGGDKTRKGQVIQF.

This sequence belongs to the eukaryotic ribosomal protein eL42 family. In terms of assembly, component of the large ribosomal subunit.

Its subcellular location is the cytoplasm. In terms of biological role, component of the large ribosomal subunit. The ribosome is a large ribonucleoprotein complex responsible for the synthesis of proteins in the cell. In Papio anubis (Olive baboon), this protein is Large ribosomal subunit protein eL42 (RPL36A).